A 282-amino-acid polypeptide reads, in one-letter code: Protease HtpX homolog (282 aa).

The next 2 helical transmembrane spans lie at 6 to 26 (TLVL…LIGG) and 29 to 49 (GATF…FFSH). His130 serves as a coordination point for Zn(2+). Residue Glu131 is part of the active site. His134 serves as a coordination point for Zn(2+). 2 helical membrane passes run 140 to 160 (ILIS…AQMA) and 180 to 200 (IVAL…QLAI). Residue Glu205 participates in Zn(2+) binding.

It belongs to the peptidase M48B family. Zn(2+) is required as a cofactor.

It is found in the cell inner membrane. This Thermodesulfovibrio yellowstonii (strain ATCC 51303 / DSM 11347 / YP87) protein is Protease HtpX homolog.